The following is a 586-amino-acid chain: Potassium-transporting ATPase potassium-binding subunit (586 aa).

Helical transmembrane passes span 11–31 (LFLV…AKVF), 67–87 (AVAV…ILML), 136–156 (GLAV…IAVI), 179–199 (LYVL…QGVI), 279–299 (VEIF…GVMV), 306–326 (WAIL…LQGV), 351–371 (FGLA…CGAV), 381–401 (LGGM…GGVG), 403–423 (GLYT…LMIG), 442–462 (IITV…AMIT), 507–527 (ILGS…VLAM), and 551–571 (FALW…FPAL).

It belongs to the KdpA family. The system is composed of three essential subunits: KdpA, KdpB and KdpC.

The protein localises to the cell inner membrane. Functionally, part of the high-affinity ATP-driven potassium transport (or Kdp) system, which catalyzes the hydrolysis of ATP coupled with the electrogenic transport of potassium into the cytoplasm. This subunit binds the periplasmic potassium ions and delivers the ions to the membrane domain of KdpB through an intramembrane tunnel. The polypeptide is Potassium-transporting ATPase potassium-binding subunit (Geobacter metallireducens (strain ATCC 53774 / DSM 7210 / GS-15)).